A 77-amino-acid chain; its full sequence is Large ribosomal subunit protein bL28 (77 aa).

It belongs to the bacterial ribosomal protein bL28 family.

This chain is Large ribosomal subunit protein bL28, found in Polynucleobacter asymbioticus (strain DSM 18221 / CIP 109841 / QLW-P1DMWA-1) (Polynucleobacter necessarius subsp. asymbioticus).